The chain runs to 411 residues: Probable peptidoglycan glycosyltransferase FtsW (411 aa).

Residues 1-40 (MLERMLPFLGRKRDKAAADLPVRVGHSAPRNSRMLEYDQN) are Cytoplasmic-facing. Residues 41–61 (LVWVTLLLLAYGLVMVYSATI) form a helical membrane-spanning segment. The Periplasmic segment spans residues 62–81 (SFHDSPRYAQWSPYHYFIRD). The chain crosses the membrane as a helical span at residues 82–102 (LFSIAAALLASWIVVQIPMAE). Over 103 to 109 (LQKWSMR) the chain is Cytoplasmic. A helical membrane pass occupies residues 110-130 (FFFLSLIGLVLVLLPHIGKDV). Residues 131-136 (NGSKRW) lie on the Periplasmic side of the membrane. A helical transmembrane segment spans residues 137–157 (VVFPGGLNFQPSELVKLTALI). The Cytoplasmic segment spans residues 158–172 (YAADFMVRKQEVKQS). A helical transmembrane segment spans residues 173–193 (LLKTFLPMMAVMMIVGVLLLA). Topologically, residues 194 to 196 (EPD) are periplasmic. A helical transmembrane segment spans residues 197-217 (MGAFLVIASITLAILFLGGAN). Over 218 to 219 (GK) the chain is Cytoplasmic. Residues 220-240 (LFSVFSVAVIGAFVLMIVLSP) form a helical membrane-spanning segment. Residues 241–298 (WRRDRIFAYLNPWSESNALGSAYQLSHALIAMGRGEWFGVGLGGSIEKLHYLPEAHTD) lie on the Periplasmic side of the membrane. A helical transmembrane segment spans residues 299–319 (FLLAIIGEELGLVGVGVVIFA). Topologically, residues 320-347 (FYWIVRRAFDIGRQALVLDRMYSALVAQ) are cytoplasmic. The chain crosses the membrane as a helical span at residues 348 to 368 (GIGVWIGGQAFINIGVNLGLL). The Periplasmic portion of the chain corresponds to 369-374 (PTKGLT). A helical membrane pass occupies residues 375–395 (LPLMSYGGSALLLNCMAIAVL). Residues 396–411 (LRVDFENRILMRGGHV) lie on the Cytoplasmic side of the membrane.

It belongs to the SEDS family. FtsW subfamily.

It is found in the cell inner membrane. It carries out the reaction [GlcNAc-(1-&gt;4)-Mur2Ac(oyl-L-Ala-gamma-D-Glu-L-Lys-D-Ala-D-Ala)](n)-di-trans,octa-cis-undecaprenyl diphosphate + beta-D-GlcNAc-(1-&gt;4)-Mur2Ac(oyl-L-Ala-gamma-D-Glu-L-Lys-D-Ala-D-Ala)-di-trans,octa-cis-undecaprenyl diphosphate = [GlcNAc-(1-&gt;4)-Mur2Ac(oyl-L-Ala-gamma-D-Glu-L-Lys-D-Ala-D-Ala)](n+1)-di-trans,octa-cis-undecaprenyl diphosphate + di-trans,octa-cis-undecaprenyl diphosphate + H(+). It functions in the pathway cell wall biogenesis; peptidoglycan biosynthesis. In terms of biological role, peptidoglycan polymerase that is essential for cell division. This is Probable peptidoglycan glycosyltransferase FtsW from Thiomonas intermedia (strain K12) (Thiobacillus intermedius).